Consider the following 124-residue polypeptide: Large ribosomal subunit protein bL21 (124 aa).

The segment at 105–124 is disordered; sequence TVKAEPKSKRAPAPEAAADA. The span at 115–124 shows a compositional bias: low complexity; that stretch reads APAPEAAADA.

It belongs to the bacterial ribosomal protein bL21 family. In terms of assembly, part of the 50S ribosomal subunit. Contacts protein L20.

Functionally, this protein binds to 23S rRNA in the presence of protein L20. The sequence is that of Large ribosomal subunit protein bL21 from Xanthobacter autotrophicus (strain ATCC BAA-1158 / Py2).